The chain runs to 968 residues: RNA polymerase-associated protein RapA (968 aa).

The region spanning 164–334 (EVGQRHAPRV…FARLRLLDPN (171 aa)) is the Helicase ATP-binding domain. ATP is bound at residue 177–184 (DEVGLGKT). Residues 280–283 (DEAH) carry the DEAH box motif. A Helicase C-terminal domain is found at 493-644 (WLVDFLLDLR…TCPTGRALYD (152 aa)).

The protein belongs to the SNF2/RAD54 helicase family. RapA subfamily. In terms of assembly, interacts with the RNAP. Has a higher affinity for the core RNAP than for the holoenzyme. Its ATPase activity is stimulated by binding to RNAP.

Its function is as follows. Transcription regulator that activates transcription by stimulating RNA polymerase (RNAP) recycling in case of stress conditions such as supercoiled DNA or high salt concentrations. Probably acts by releasing the RNAP, when it is trapped or immobilized on tightly supercoiled DNA. Does not activate transcription on linear DNA. Probably not involved in DNA repair. The protein is RNA polymerase-associated protein RapA of Sodalis glossinidius (strain morsitans).